The chain runs to 193 residues: Holliday junction branch migration complex subunit RuvA (193 aa).

The domain I stretch occupies residues 1–63 (MIGKLTGTVT…ENINKLYGFE (63 aa)). Positions 64-148 (CRKSQEVARM…GIASSTNVHI (85 aa)) are domain II. Residues 149–150 (AS) are flexible linker. A domain III region spans residues 150–193 (SEAVSALVKLGFQHKPSHKVVMEIMTKRPAIEIAELITLALKML).

The protein belongs to the RuvA family. Homotetramer. Forms an RuvA(8)-RuvB(12)-Holliday junction (HJ) complex. HJ DNA is sandwiched between 2 RuvA tetramers; dsDNA enters through RuvA and exits via RuvB. An RuvB hexamer assembles on each DNA strand where it exits the tetramer. Each RuvB hexamer is contacted by two RuvA subunits (via domain III) on 2 adjacent RuvB subunits; this complex drives branch migration. In the full resolvosome a probable DNA-RuvA(4)-RuvB(12)-RuvC(2) complex forms which resolves the HJ.

The protein localises to the cytoplasm. Its function is as follows. The RuvA-RuvB-RuvC complex processes Holliday junction (HJ) DNA during genetic recombination and DNA repair, while the RuvA-RuvB complex plays an important role in the rescue of blocked DNA replication forks via replication fork reversal (RFR). RuvA specifically binds to HJ cruciform DNA, conferring on it an open structure. The RuvB hexamer acts as an ATP-dependent pump, pulling dsDNA into and through the RuvAB complex. HJ branch migration allows RuvC to scan DNA until it finds its consensus sequence, where it cleaves and resolves the cruciform DNA. In Neorickettsia sennetsu (strain ATCC VR-367 / Miyayama) (Ehrlichia sennetsu), this protein is Holliday junction branch migration complex subunit RuvA.